Reading from the N-terminus, the 248-residue chain is 3-deoxy-manno-octulosonate cytidylyltransferase (248 aa).

It belongs to the KdsB family.

It localises to the cytoplasm. It carries out the reaction 3-deoxy-alpha-D-manno-oct-2-ulosonate + CTP = CMP-3-deoxy-beta-D-manno-octulosonate + diphosphate. The protein operates within nucleotide-sugar biosynthesis; CMP-3-deoxy-D-manno-octulosonate biosynthesis; CMP-3-deoxy-D-manno-octulosonate from 3-deoxy-D-manno-octulosonate and CTP: step 1/1. It participates in bacterial outer membrane biogenesis; lipopolysaccharide biosynthesis. Activates KDO (a required 8-carbon sugar) for incorporation into bacterial lipopolysaccharide in Gram-negative bacteria. In Shigella dysenteriae serotype 1 (strain Sd197), this protein is 3-deoxy-manno-octulosonate cytidylyltransferase.